Here is a 214-residue protein sequence, read N- to C-terminus: Variable small protein 24 (214 aa).

The first 18 residues, 1-18 (MRKRISAIIMTLFMVFMS), serve as a signal peptide directing secretion. C19 carries the N-palmitoyl cysteine lipid modification. Residue C19 is the site of S-diacylglycerol cysteine attachment. Positions 146-172 (TELGKKDASDDDTKKAIKKDNSDKTKG) are disordered.

It belongs to the variable small protein (Vsp) family.

Its subcellular location is the cell outer membrane. Functionally, the Vlp and Vsp proteins are antigenically distinct proteins, only one vlp or vsp gene is transcriptionally active at any one time. Switching between these genes is a mechanism of host immune response evasion. The sequence is that of Variable small protein 24 from Borrelia hermsii.